The sequence spans 256 residues: Carboxysome shell protein CsoS1D (256 aa).

Positions 1–24 (MEPTSSLNRGDRKKGSSLVTGSEV) are disordered. 2 BMC circularly permuted domains span residues 55 to 157 (ELRT…RTKP) and 158 to 256 (STSW…ISNY). A Gates the pore motif is present at residues 120–121 (ER).

Belongs to the EutL/PduB family. Homotrimer. Forms a dimer of stacked trimers, the same faces interact. A CsoS1-CsoS1D-CsoS2 complex can be isolated following expression in E.coli.

It is found in the carboxysome. Its function is as follows. Part of the carboxysome shell, a polyhedral inclusion where RuBisCO (ribulose bisphosphate carboxylase, cbbL-cbbS) is sequestered. It may control transport of RuBisCO reactants in and out of the carboxysome. There are estimated to be 6 CsoS1D hexamers per carboxysome. This is Carboxysome shell protein CsoS1D from Prochlorococcus marinus subsp. pastoris (strain CCMP1986 / NIES-2087 / MED4).